The chain runs to 199 residues: ATP-dependent Clp protease proteolytic subunit (199 aa).

Serine 97 acts as the Nucleophile in catalysis. Histidine 122 is an active-site residue.

Belongs to the peptidase S14 family. As to quaternary structure, fourteen ClpP subunits assemble into 2 heptameric rings which stack back to back to give a disk-like structure with a central cavity, resembling the structure of eukaryotic proteasomes.

The protein localises to the cytoplasm. It catalyses the reaction Hydrolysis of proteins to small peptides in the presence of ATP and magnesium. alpha-casein is the usual test substrate. In the absence of ATP, only oligopeptides shorter than five residues are hydrolyzed (such as succinyl-Leu-Tyr-|-NHMec, and Leu-Tyr-Leu-|-Tyr-Trp, in which cleavage of the -Tyr-|-Leu- and -Tyr-|-Trp bonds also occurs).. In terms of biological role, cleaves peptides in various proteins in a process that requires ATP hydrolysis. Has a chymotrypsin-like activity. Plays a major role in the degradation of misfolded proteins. This chain is ATP-dependent Clp protease proteolytic subunit, found in Geobacter metallireducens (strain ATCC 53774 / DSM 7210 / GS-15).